Consider the following 157-residue polypeptide: Cytochrome P450 monooxygenase atG (157 aa).

C97 is a heme binding site.

Belongs to the cytochrome P450 family. Heme is required as a cofactor.

The protein operates within secondary metabolite biosynthesis. Functionally, cytochrome P450 monooxygenase; part of the gene cluster that mediates the biosynthesis of terreic acid, a quinone epoxide inhibitor of Bruton's tyrosine kinase (BTK). The first step of the pathway is the synthesis of 6-methylsalicylic acid (6-MSA) by the 6-methylsalicylic acid synthase atX. In the biosynthesis of 6-MSA, atX utilizes one acetyl-CoA and three malonyl-CoAs as its substrates and catalyzes a series of programmed reactions including Claisen condensation, reduction, aldol cyclization, and the hydrolytic cleavage that yields 6-MSA. The 6-methylsalicylate 1-monooxygenase atA then catalyzes the decarboxylative hydroxylation of 6-MSA to 3-methylcatechol. The next step is the conversion of 3-methylcatechol to 3-methyl-1,2,4-benzenetriol by cytochrome P450 monooxygenase atE, which is enhanced by cytochrome P450 monooxygenase atG. Then, the epoxidase atD catalyzes the epoxidation and hydroxyl oxidation of 3-methyl-1,2,4-benzenetriol to terremutin. Lastly, GMC oxidoreductase atC oxidizes terremutin to terreic acid. The chain is Cytochrome P450 monooxygenase atG from Aspergillus terreus (strain NIH 2624 / FGSC A1156).